A 126-amino-acid chain; its full sequence is Glycine cleavage system H protein (126 aa).

The region spanning 22 to 104 (VATIGITEYA…YEKAWMVKVE (83 aa)) is the Lipoyl-binding domain. At K63 the chain carries N6-lipoyllysine.

This sequence belongs to the GcvH family. As to quaternary structure, the glycine cleavage system is composed of four proteins: P, T, L and H. The cofactor is (R)-lipoate.

In terms of biological role, the glycine cleavage system catalyzes the degradation of glycine. The H protein shuttles the methylamine group of glycine from the P protein to the T protein. Functionally, is also involved in protein lipoylation via its role as an octanoyl/lipoyl carrier protein intermediate. This is Glycine cleavage system H protein from Staphylococcus aureus (strain JH1).